A 128-amino-acid chain; its full sequence is Probable 4-amino-4-deoxy-L-arabinose-phosphoundecaprenol flippase subunit ArnF (128 aa).

Residues 1–5 (MKGYG) are Cytoplasmic-facing. Residues 6–26 (WGIGSVVLVTVAQLILKWGMM) form a helical membrane-spanning segment. At 27–47 (NTPLMSLADINGQFVFNHLPQ) the chain is on the periplasmic side. A helical membrane pass occupies residues 48-68 (FIAVICGLAGYALSMLCWFFA). The Cytoplasmic portion of the chain corresponds to 69 to 77 (LRYLPLNRA). The chain crosses the membrane as a helical span at residues 78-98 (YPLLSLSYALVYLGAVSLPWF). The Periplasmic portion of the chain corresponds to 99–101 (SES). A helical transmembrane segment spans residues 102–122 (ATLLKTLGAGFILLGIWLINT). The Cytoplasmic portion of the chain corresponds to 123 to 128 (KPIAKD).

Belongs to the ArnF family. As to quaternary structure, heterodimer of ArnE and ArnF.

It localises to the cell inner membrane. It participates in bacterial outer membrane biogenesis; lipopolysaccharide biosynthesis. Translocates 4-amino-4-deoxy-L-arabinose-phosphoundecaprenol (alpha-L-Ara4N-phosphoundecaprenol) from the cytoplasmic to the periplasmic side of the inner membrane. This Yersinia enterocolitica serotype O:8 / biotype 1B (strain NCTC 13174 / 8081) protein is Probable 4-amino-4-deoxy-L-arabinose-phosphoundecaprenol flippase subunit ArnF.